Reading from the N-terminus, the 223-residue chain is CKLF-like MARVEL transmembrane domain-containing protein 5 (223 aa).

The MARVEL domain occupies 29–213 (FLTSHKGILL…DAFKIYRTEM (185 aa)). A run of 4 helical transmembrane segments spans residues 35–55 (GILL…FTAS), 56–76 (ISAY…FLFL), 162–182 (FLRC…AVTS), and 186–206 (AAIA…YDAF).

The protein belongs to the chemokine-like factor family. Highly expressed in the brain.

Its subcellular location is the membrane. The protein is CKLF-like MARVEL transmembrane domain-containing protein 5 (CMTM5) of Homo sapiens (Human).